Reading from the N-terminus, the 1396-residue chain is MRPFIDDAKRRAERRLSASRQSISARRMFASSFPDRLKVDADDAQMDYTAPPSSNDSRDGMQYMQQSVMSLIAAVGSRTDLRARFDDSSDSEEETRTRPRFLSEKPFDQQITASPRADVTLHVPSAPETRSSSRERGRRHRRSISEHKLFRPFKAGSASQDKKQDASPDPGPSTSDRLSPIPVLPRPRSATPRAAPILSRMVEARALLETENPEENPQTLEEKEQGVSKKSQVSPLSRQLMEMFRFPTPEKVVVEYACSLLQSMLLQGYMYVTEGHICFYAYLPRQSTRVIKSGYIYKRGRKNPKYNRYWFSLKEDVLSYYADPSNLYFPSGQIDLRYGISASLTEPKDKSRESRDFQVTTDHRTYYFRADSSVNAKEWVRALQKVIFRTHNEGESIKVAFPIENILDVEESPMVEFAQTFKIRVVESEETYAIDEHYFTFFDPDSGRRAFDLLKGLISGTPTRSPPGLSPLPDHTAQPRRSRGSQNRWSLTSGSKSQVVSTRRQRSASTSILGSGTGNENSPQRQEDSSSSFFNSIDQVTESSAVLQSITDTTESASQILNRSDVFQSPTIHTWQQRTSGTARSNRRHSDEITRSTTEHGLDGISLARDGPEMQYTNSDSEQESKDASRLYSAVALNEIVKAGTYPLQRAAGLAGYLKSRSKEMSNLLATESMGYIEKVSGMWAGGRRHYGETDGLLPDDRALYPETAEESLRDRERFRAHFALPPTEKLEAAYFAYLHRALPLYGKIYISQNRLCFRSLLPGTRTKMILPLHDIENVEKEKGFQFGYHGLVVVIRGHEELFFEFNAADARDDCAVTLHQRLESAKFLVESISLSQQETDESEAAKVEHRMLQEARRNASAEQDLRPGLSESSELHSIFDDPRASIVNFKPAEPLKITCLTIGSRGDVQPYIALCKGLLAEGHKPKIATHAEFEPWVRKHGIDFAPVDGDPAELMRLCVENGMFTYSFLKEATAKFRGWIDDLLSSAWRACQDSDLLIESPSAMAGIHIAEALRIPYFRGFTMPWSRTRAYPHAFAVPESRLGGAYNYITYVMFENVFWRAIAGQVNRWRMKELGLRATNLDKMQPNKVPFLYNFSPSVVPPPLDFPDWVRITGYWFLSESSDWTPPRALAEFIQCARQDGKKIVYIGFGSIVVSDPSALTRTVVESVQKADVRCILSKGWSARLGDPTSTKVEIPLPPEIHQIQSAPHDWLFSQIDAAAHHGGAGTTGASLRAGVPTIIKPFFGDQFFFGNRVEDLGVGICMKKLNVSVFSRALWTATHDERMIVRAKQLGERIRSEDGVATAIQAIYRDLEYATTLTRQRSSISSTPFSPTPSTKTSDDQNANDDIADIEDWTFIGDESDLEFPRRARERAVSGADNIPERTILGSRSIYADS.

Residues 1–16 (MRPFIDDAKRRAERRL) are compositionally biased toward basic and acidic residues. Disordered regions lie at residues 1 to 21 (MRPF…ASRQ), 40 to 64 (DADD…MQYM), 83 to 196 (ARFD…RAAP), and 209 to 232 (ETEN…KKSQ). Residues 94–107 (ETRTRPRFLSEKPF) are compositionally biased toward basic and acidic residues. Over residues 186 to 196 (RPRSATPRAAP) the composition is skewed to low complexity. The region spanning 238–273 (RQLMEMFRFPTPEKVVVEYACSLLQSMLLQGYMYVT) is the GRAM 1 domain. Residues 289–388 (RVIKSGYIYK…WVRALQKVIF (100 aa)) form the PH domain. 2 disordered regions span residues 460–532 (GTPT…SSSS) and 571–627 (TIHT…ESKD). Composition is skewed to polar residues over residues 484 to 532 (GSQN…SSSS) and 571 to 584 (TIHT…GTAR). Positions 588–602 (RHSDEITRSTTEHGL) are enriched in basic and acidic residues. In terms of domain architecture, GRAM 2 spans 717–783 (ERFRAHFALP…HDIENVEKEK (67 aa)). Residues Ser905, Arg906, Asp908, Ala1208, His1210, His1223, Gly1227, Thr1228, Asp1247, and Gln1248 each coordinate UDP-alpha-D-glucose. Low complexity predominate over residues 1324 to 1343 (SSISSTPFSPTPSTKTSDDQ). Residues 1324 to 1346 (SSISSTPFSPTPSTKTSDDQNAN) form a disordered region.

Belongs to the glycosyltransferase 28 family.

It localises to the cytoplasm. The protein localises to the preautophagosomal structure membrane. The enzyme catalyses a sterol + UDP-alpha-D-glucose = a sterol 3-beta-D-glucoside + UDP + H(+). It catalyses the reaction ergosterol + UDP-alpha-D-glucose = ergosteryl 3-beta-D-glucoside + UDP + H(+). In terms of biological role, sterol glycosyltransferase responsible for the glycosylation of ergosterol to form ergosterol-glucoside. This chain is Sterol 3-beta-glucosyltransferase, found in Emericella nidulans (strain FGSC A4 / ATCC 38163 / CBS 112.46 / NRRL 194 / M139) (Aspergillus nidulans).